Reading from the N-terminus, the 466-residue chain is Asparagine--tRNA ligase (466 aa).

Belongs to the class-II aminoacyl-tRNA synthetase family. As to quaternary structure, homodimer.

The protein localises to the cytoplasm. It carries out the reaction tRNA(Asn) + L-asparagine + ATP = L-asparaginyl-tRNA(Asn) + AMP + diphosphate + H(+). The polypeptide is Asparagine--tRNA ligase (Yersinia pseudotuberculosis serotype O:1b (strain IP 31758)).